Here is an 84-residue protein sequence, read N- to C-terminus: U8-theraphotoxin-Hhn1d (84 aa).

A signal peptide spans 1-21 (MKVVLIVCLVWVMAMMELVSC). 5 cysteine pairs are disulfide-bonded: Cys-23–Cys-35, Cys-29–Cys-44, Cys-34–Cys-67, Cys-54–Cys-75, and Cys-69–Cys-81.

This sequence belongs to the AVIT (prokineticin) family. In terms of tissue distribution, expressed by the venom gland.

Its subcellular location is the secreted. The polypeptide is U8-theraphotoxin-Hhn1d (Cyriopagopus hainanus (Chinese bird spider)).